The chain runs to 504 residues: Ribose import ATP-binding protein RbsA (504 aa).

ABC transporter domains lie at 6-242 and 250-495; these read LELN…VGRR and IDVQ…VGKT. Residue 38 to 45 coordinates ATP; sequence GENGAGKS.

It belongs to the ABC transporter superfamily. Ribose importer (TC 3.A.1.2.1) family. As to quaternary structure, the complex is composed of an ATP-binding protein (RbsA), two transmembrane proteins (RbsC) and a solute-binding protein (RbsB).

It is found in the cell inner membrane. The enzyme catalyses D-ribose(out) + ATP + H2O = D-ribose(in) + ADP + phosphate + H(+). Functionally, part of the ABC transporter complex RbsABC involved in ribose import. Responsible for energy coupling to the transport system. The chain is Ribose import ATP-binding protein RbsA from Aliivibrio fischeri (strain ATCC 700601 / ES114) (Vibrio fischeri).